Reading from the N-terminus, the 340-residue chain is MLDIDKSTVDFLVTENMVQEVEKVLSHDVPLVHAIVEEMVKRDIDRIYFVACGSPLNAAQTAKHLADRFSDLQVYAISGWEFCDNTPYRLDDRCAVIGVSDYGKTEEVIKALELGRACGALTAAFTKRADSPITSAAEFSIDYQADCIWEIHLLLCYSVVLEMITRLAPNAEIGKIKNDLKQLPNALGHLVRTWEEKGRQLGELASQWPMIYTVAAGPLRPLGYKEGIVTLMEFTWTHGCVIESGEFRHGPLEIVEPGVPFLFLLGNDESRHTTERAINFVKQRTDNVIVIDYAEISQGLHPWLAPFLMFVPMEWLCYYLSIYKDHNPDERRYYGGLVEY.

SIS domains are found at residues 35–169 and 201–331; these read IVEE…RLAP and LGEL…PDER.

Homododecamer.

It catalyses the reaction N(6)-(6-phospho-D-fructosyl)-L-lysine + H2O = D-glucose 6-phosphate + L-lysine. The protein operates within carbohydrate metabolism; fructoselysine degradation; D-glucose 6-phosphate and lysine from fructoselysine: step 2/2. Its activity is regulated as follows. Strongly inhibited by ZnCl(2). In terms of biological role, catalyzes the reversible conversion of fructoselysine 6-phosphate to glucose 6-phosphate and lysine. Functions in a fructoselysine degradation pathway that allows E.coli to grow on fructoselysine or psicoselysine. The chain is Fructoselysine 6-phosphate deglycase from Escherichia coli (strain K12).